The sequence spans 108 residues: uncharacterized protein (108 aa).

2 helical membrane-spanning segments follow: residues 5-27 (TVYG…QLEI) and 83-105 (IFLM…LNIF).

It localises to the membrane. This is an uncharacterized protein from Schizosaccharomyces pombe (strain 972 / ATCC 24843) (Fission yeast).